Reading from the N-terminus, the 359-residue chain is Alanine racemase, biosynthetic (359 aa).

The active-site Proton acceptor; specific for D-alanine is K34. K34 bears the N6-(pyridoxal phosphate)lysine mark. R129 contributes to the substrate binding site. Residue Y255 is the Proton acceptor; specific for L-alanine of the active site. M303 provides a ligand contact to substrate.

The protein belongs to the alanine racemase family. In terms of assembly, monomer but homodimer in the presence of the substrate. The cofactor is pyridoxal 5'-phosphate.

The enzyme catalyses L-alanine = D-alanine. The protein operates within amino-acid biosynthesis; D-alanine biosynthesis; D-alanine from L-alanine: step 1/1. It functions in the pathway cell wall biogenesis; peptidoglycan biosynthesis. Catalyzes the interconversion of L-alanine and D-alanine. This is Alanine racemase, biosynthetic (alr) from Shigella sonnei.